A 430-amino-acid chain; its full sequence is UDP-N-acetylglucosamine 1-carboxyvinyltransferase (430 aa).

22–23 provides a ligand contact to phosphoenolpyruvate; that stretch reads KN. Arg-102 contributes to the UDP-N-acetyl-alpha-D-glucosamine binding site. Cys-126 serves as the catalytic Proton donor. Cys-126 bears the 2-(S-cysteinyl)pyruvic acid O-phosphothioketal mark. UDP-N-acetyl-alpha-D-glucosamine-binding positions include 131–135, 172–175, Asp-317, and Ile-339; these read RPVDL and KVSV.

Belongs to the EPSP synthase family. MurA subfamily.

Its subcellular location is the cytoplasm. It catalyses the reaction phosphoenolpyruvate + UDP-N-acetyl-alpha-D-glucosamine = UDP-N-acetyl-3-O-(1-carboxyvinyl)-alpha-D-glucosamine + phosphate. It functions in the pathway cell wall biogenesis; peptidoglycan biosynthesis. Functionally, cell wall formation. Adds enolpyruvyl to UDP-N-acetylglucosamine. The chain is UDP-N-acetylglucosamine 1-carboxyvinyltransferase from Rhizobium etli (strain ATCC 51251 / DSM 11541 / JCM 21823 / NBRC 15573 / CFN 42).